A 293-amino-acid polypeptide reads, in one-letter code: MVTVRAPATSANLGSGFDVFGAALTRPADVVTVEKAAETTIEVTGVGAQYIPEDPKKNTVGAVVEALDAPARIHIDKGVRPASGLGSSAASAAGAAVALNRLYDRGLSRSELVPIAAEGEAVVSGVAHSDNVAPSILGGFTVTTSEGTHAVDASIPLVVCLPDVAVSTRDARRVVPETASMDDLVETVGNAATLAIGMCRSDPDLVGAGMSDPVVTPERARLITGYDEVRAAAFDAGATGVTVSGAGPAILAVCRDGQRRGVAAAMLDAFSDAGIDSRAYQTRIGRGSTVLEE.

Arg-80–Ala-90 contacts ATP.

Belongs to the GHMP kinase family. Homoserine kinase subfamily.

It is found in the cytoplasm. It carries out the reaction L-homoserine + ATP = O-phospho-L-homoserine + ADP + H(+). It participates in amino-acid biosynthesis; L-threonine biosynthesis; L-threonine from L-aspartate: step 4/5. Catalyzes the ATP-dependent phosphorylation of L-homoserine to L-homoserine phosphate. The protein is Homoserine kinase of Halorubrum lacusprofundi (strain ATCC 49239 / DSM 5036 / JCM 8891 / ACAM 34).